A 372-amino-acid chain; its full sequence is Cytochrome b (372 aa).

The next 4 membrane-spanning stretches (helical) occupy residues 25-45, 69-90, 105-125, and 170-190; these read FGSM…FLAI, WIMQ…YIHI, WFSG…GYVL, and FFAL…IHII. Positions 75 and 89 each coordinate heme b. Heme b-binding residues include histidine 174 and histidine 188. An a ubiquinone-binding site is contributed by histidine 193. A run of 4 helical transmembrane segments spans residues 218 to 238, 280 to 300, 312 to 332, and 339 to 358; these read YKDM…LSFM, LGGT…PFTH, LAQT…WTAT, and FILI…IMNP.

It belongs to the cytochrome b family. In terms of assembly, the cytochrome bc1 complex contains 3 respiratory subunits (MT-CYB, CYC1 and UQCRFS1), 2 core proteins (UQCRC1 and UQCRC2) and probably 6 low-molecular weight proteins. Heme b serves as cofactor.

It localises to the mitochondrion inner membrane. Functionally, component of the ubiquinol-cytochrome c reductase complex (complex III or cytochrome b-c1 complex) that is part of the mitochondrial respiratory chain. The b-c1 complex mediates electron transfer from ubiquinol to cytochrome c. Contributes to the generation of a proton gradient across the mitochondrial membrane that is then used for ATP synthesis. In Sinomicrurus japonicus (Coral snake), this protein is Cytochrome b (MT-CYB).